We begin with the raw amino-acid sequence, 409 residues long: Elongation factor Tu (409 aa).

Residues 10 to 214 form the tr-type G domain; it reads KPHVNIGTIG…EVDAYIPTPE (205 aa). A G1 region spans residues 19-26; sequence GHVDHGKT. 19–26 contacts GTP; sequence GHVDHGKT. Threonine 26 lines the Mg(2+) pocket. The segment at 60 to 64 is G2; sequence GITIN. Residues 81-84 form a G3 region; it reads DCPG. Residues 81-85 and 136-139 contribute to the GTP site; these read DCPGH and NKQD. Residues 136–139 form a G4 region; it reads NKQD. The G5 stretch occupies residues 174-176; the sequence is SAL.

The protein belongs to the TRAFAC class translation factor GTPase superfamily. Classic translation factor GTPase family. EF-Tu/EF-1A subfamily. In terms of assembly, monomer.

The protein localises to the cytoplasm. The enzyme catalyses GTP + H2O = GDP + phosphate + H(+). Functionally, GTP hydrolase that promotes the GTP-dependent binding of aminoacyl-tRNA to the A-site of ribosomes during protein biosynthesis. The polypeptide is Elongation factor Tu (Acaryochloris marina (strain MBIC 11017)).